A 197-amino-acid polypeptide reads, in one-letter code: MRRIILASASPRRKELLRQLIGDNFLVSPSSYEEPPQPDLAPEELLIRHSIGKARDVAKHFSSGIIISADTSVLYNGEVLGKPNFPEKAEEMLKKLNGRKFRVVTGLTVLDLDSAQEISESESTDVWMSEMDDEQILAYVRTGEPLDKAGAFAAQGKGAVLIERIEGDFFNAVGLPLFRLGKILEKLGVSVFDESFS.

The Proton acceptor role is filled by D70.

It belongs to the Maf family. YhdE subfamily. It depends on a divalent metal cation as a cofactor.

The protein localises to the cytoplasm. It catalyses the reaction dTTP + H2O = dTMP + diphosphate + H(+). It carries out the reaction UTP + H2O = UMP + diphosphate + H(+). Nucleoside triphosphate pyrophosphatase that hydrolyzes dTTP and UTP. May have a dual role in cell division arrest and in preventing the incorporation of modified nucleotides into cellular nucleic acids. This chain is dTTP/UTP pyrophosphatase, found in Methanosarcina mazei (strain ATCC BAA-159 / DSM 3647 / Goe1 / Go1 / JCM 11833 / OCM 88) (Methanosarcina frisia).